The primary structure comprises 57 residues: UPF0391 membrane protein XC_2938 (57 aa).

The next 2 membrane-spanning stretches (helical) occupy residues Trp-4–Ala-24 and Phe-33–Ala-53.

This sequence belongs to the UPF0391 family.

The protein localises to the cell membrane. This chain is UPF0391 membrane protein XC_2938, found in Xanthomonas campestris pv. campestris (strain 8004).